We begin with the raw amino-acid sequence, 153 residues long: Heavy metal-associated isoprenylated plant protein 25 (153 aa).

The 65-residue stretch at 24–88 (LQTVDVRVLI…IIHRTGKRAE (65 aa)) folds into the HMA domain. 2 residues coordinate a metal cation: Cys35 and Cys38. Residue Cys150 is modified to Cysteine methyl ester. Residue Cys150 is the site of S-farnesyl cysteine attachment. The propeptide at 151–153 (VVM) is removed in mature form.

Belongs to the HIPP family. Expressed in roots, shoot apical meristem, trichomes and flower buds.

Its subcellular location is the membrane. Functionally, heavy-metal-binding protein. Binds cadmium. May be involved in cadmium transport and play a role in cadmium detoxification. This chain is Heavy metal-associated isoprenylated plant protein 25, found in Arabidopsis thaliana (Mouse-ear cress).